We begin with the raw amino-acid sequence, 125 residues long: MEHVAFGSEDIENTLAKMDDGQLDGLAFGAIQLDGDGNILQYNAAEGDITGRDPKQVIGKNFFKDVAPCTDSPEFYGKFKEGVASGNLNTMFEYTFDYQMTPTKVKVHMKKALSGDSYWVFVKRV.

Residues 23 to 86 (LDGLAFGAIQ…GKFKEGVASG (64 aa)) form the PAS domain. Position 69 is an S-(4-hydroxycinnamyl)cysteine (C69).

This sequence belongs to the photoactive yellow protein family. As to quaternary structure, monomer. In terms of processing, the 4-hydroxycinnamic acid (p-coumaric acid) chromophore is covalently bound via a thioester linkage.

Photoactive blue light protein. Probably functions as a photoreceptor for a negative phototaxis response. The protein is Photoactive yellow protein (pyp) of Halorhodospira halophila (Ectothiorhodospira halophila).